We begin with the raw amino-acid sequence, 689 residues long: Glycine--tRNA ligase beta subunit (689 aa).

Belongs to the class-II aminoacyl-tRNA synthetase family. In terms of assembly, tetramer of two alpha and two beta subunits.

It is found in the cytoplasm. It carries out the reaction tRNA(Gly) + glycine + ATP = glycyl-tRNA(Gly) + AMP + diphosphate. This Shewanella baltica (strain OS185) protein is Glycine--tRNA ligase beta subunit.